We begin with the raw amino-acid sequence, 887 residues long: Alpha-amylase 3, chloroplastic (887 aa).

A chloroplast-targeting transit peptide spans 1-55 (MSTVPIESLLHHSYLRHNSKVNRGNRSFIPISLNLRSHFTSNKLLHSIGKSVGVS). A disulfide bridge links C499 with C587. Substrate is bound by residues 545–546 (YM) and 664–669 (RLDFVR). Residue D666 is the Nucleophile of the active site. The active-site Proton donor is the E691. Residues W693, S695, Q712, K754, 760–762 (GWW), H773, Q779, K857, and W884 contribute to the substrate site.

Belongs to the glycosyl hydrolase 13 family. It depends on Ca(2+) as a cofactor. Expressed in developing siliques.

It is found in the plastid. The protein localises to the chloroplast. It catalyses the reaction Endohydrolysis of (1-&gt;4)-alpha-D-glucosidic linkages in polysaccharides containing three or more (1-&gt;4)-alpha-linked D-glucose units.. With respect to regulation, redox-regulated, with the highest activity under reducing conditions. The midpoint redox potential is -329 mV. The disulfide bridge between Cys-499 and Cys-587 inhibits catalysis. Inhibited by CuCl(2) and H(2)O(2). Functionally, possesses endoamylolytic activity in vitro, but seems not required for breakdown of transitory starch in leaves. May be involved in the determination of the final structure of glucans by shortening long linear phospho-oligosaccharides in the chloroplast stroma. Can act on both soluble and insoluble glucan substrates to release small linear and branched malto-oligosaccharides. Works synergistically with beta-amylase toward efficient starch degradation. Has activity against p-nitrophenyl maltoheptaoside (BPNP-G7), amylopectin and beta-limit dextrin. Involved in stress-induced starch degradation. This Arabidopsis thaliana (Mouse-ear cress) protein is Alpha-amylase 3, chloroplastic.